The primary structure comprises 868 residues: Ionotropic receptor 93a (868 aa).

The signal sequence occupies residues 1–28; sequence MNPGEMRPSACLLLLAGLQLSILVPTEA. Residues 29–565 are Extracellular-facing; sequence NDFSSFLSAN…ITRKPDEVSR (537 aa). 8 N-linked (GlcNAc...) asparagine glycosylation sites follow: N38, N205, N294, N305, N432, N475, N499, and N543. The helical transmembrane segment at 566 to 586 threads the bilayer; that stretch reads IYLFTAPFTVETWFCLMGIIL. At 587-642 the chain is on the cytoplasmic side; it reads LTAPTLYAINRLAPLKEMRIVGLSTVKSCFWYIFGALLQQGGMYLPTADSGRLVVG. The chain crosses the membrane as a helical span at residues 643-663; the sequence is FWWIVVIVLVTTYCGNLVAFL. Topologically, residues 664-832 are extracellular; it reads TFPKFQPGVD…HKVNMDDMQG (169 aa). The N-linked (GlcNAc...) asparagine glycan is linked to N691. The helical transmembrane segment at 833-853 threads the bilayer; that stretch reads CFLVLLLGFTLALLIVCGEFW. Over 854–868 the chain is Cytoplasmic; that stretch reads YRRFRASRKRRQFTN.

It belongs to the glutamate-gated ion channel (TC 1.A.10.1) family. In the antenna, detected in sacculus neurons which innervate the first and second chambers (at protein level). Expressed in multiple cells of the larval dorsal organ ganglion, including the dorsal organ cool cells where it is predominately localized to the dendritic bulbs (at protein level).

It is found in the cell membrane. Its function is as follows. Integral part of various neural sensory systems in the antenna that provide the neural basis for the response to environmental changes in temperature (thermosensation) and humidity (hygrosensation). Together with Ir21a and Ir25a, mediates the response of the larval dorsal organ cool cells, a trio of cool-responsive neurons, to cooling and is required for cool avoidance behavior. Together with Ir25a and Ir40a, mediates the response of the hydrosensory sacculus neurons to changes in relative humidity, and is required for dry detection and humidiy preference behavior. In Drosophila melanogaster (Fruit fly), this protein is Ionotropic receptor 93a.